Here is a 269-residue protein sequence, read N- to C-terminus: MAVGKNKGVSKGGKKGSKKKVVDPFTRKDWYDVKAPNMFKNRQVGKTLVNRTQGTKIASDGLKGRVFEVSLADLQNEPDAERSFRKFKLVAESVNGRDVLTNFHGMALTTDKLRSMVKKWQTLIECSVDVKTTDGFMLRVFCIGFTIKDSMSQRKTCYAQHSQIKNIRAKMTAIIKREITSTDLKGVVEKLLPDSIAKDIEKACQVVYPLHDVYIRKVKVLKKPRFDLSSLMELHGDGGGKAAEVSTGAASGVVVDRPEGYEPPVQASV.

Residues Met1 to Lys20 are disordered.

It belongs to the eukaryotic ribosomal protein eS1 family. In terms of assembly, component of the small ribosomal subunit. Mature ribosomes consist of a small (40S) and a large (60S) subunit. The 40S subunit contains about 33 different proteins and 1 molecule of RNA (18S). The 60S subunit contains about 49 different proteins and 3 molecules of RNA (28S, 5.8S and 5S).

The protein localises to the cytoplasm. In terms of biological role, has an essential role in oogenesis. The sequence is that of Small ribosomal subunit protein eS1 from Anopheles gambiae (African malaria mosquito).